We begin with the raw amino-acid sequence, 737 residues long: Ribosome-releasing factor 2, mitochondrial (737 aa).

Residues 1-29 (MLKYALHSGGMPRNRLLRQLSAHIFRRSY) constitute a mitochondrion transit peptide. In terms of domain architecture, tr-type G spans 31–310 (SNIRNIGILA…AVNTYLPAPE (280 aa)). GTP is bound by residues 40–47 (AHIDAGKT), 104–108 (DTPGH), and 158–161 (NKMD).

It belongs to the TRAFAC class translation factor GTPase superfamily. Classic translation factor GTPase family. EF-G/EF-2 subfamily.

Its subcellular location is the mitochondrion. In terms of biological role, mitochondrial GTPase that mediates the disassembly of ribosomes from messenger RNA at the termination of mitochondrial protein biosynthesis. Not involved in the GTP-dependent ribosomal translocation step during translation elongation. The sequence is that of Ribosome-releasing factor 2, mitochondrial from Drosophila pseudoobscura pseudoobscura (Fruit fly).